The primary structure comprises 145 residues: Large ribosomal subunit protein uL11m (145 aa).

The protein belongs to the universal ribosomal protein uL11 family.

Its subcellular location is the mitochondrion. The sequence is that of Large ribosomal subunit protein uL11m (RPL11) from Reclinomonas americana.